The sequence spans 136 residues: Protein NrdI (136 aa).

Belongs to the NrdI family.

In terms of biological role, probably involved in ribonucleotide reductase function. This chain is Protein NrdI, found in Escherichia coli O127:H6 (strain E2348/69 / EPEC).